We begin with the raw amino-acid sequence, 268 residues long: Type-5 uracil-DNA glycosylase (268 aa).

The disordered stretch occupies residues 1–29 (MHPKTGRAFRSPVEPGSGWPGDPATPQTP). Residues Cys-57, Cys-60, Cys-161, and Cys-176 each coordinate [4Fe-4S] cluster.

Belongs to the uracil-DNA glycosylase (UDG) superfamily. Type 5 (UDGb) family.

Its function is as follows. DNA glycosylase with broad substrate specificity. The polypeptide is Type-5 uracil-DNA glycosylase (Mycobacterium bovis (strain ATCC BAA-935 / AF2122/97)).